Here is a 271-residue protein sequence, read N- to C-terminus: Phosphonoacetaldehyde hydrolase (271 aa).

Catalysis depends on D12, which acts as the Nucleophile. Positions 12 and 14 each coordinate Mg(2+). K54 acts as the Schiff-base intermediate with substrate in catalysis. D188 lines the Mg(2+) pocket.

Belongs to the HAD-like hydrolase superfamily. PhnX family. As to quaternary structure, homodimer. The cofactor is Mg(2+).

The enzyme catalyses phosphonoacetaldehyde + H2O = acetaldehyde + phosphate + H(+). In terms of biological role, involved in phosphonate degradation. In Vibrio campbellii (strain ATCC BAA-1116), this protein is Phosphonoacetaldehyde hydrolase.